A 5478-amino-acid polypeptide reads, in one-letter code: Mucin-12 (5478 aa).

An N-terminal signal peptide occupies residues 1 to 16; that stretch reads MLVIWILTLALRLCAS. Residues 17-5380 lie on the Extracellular side of the membrane; that stretch reads VTTVTPEGSA…EFNIAKSLVY (5364 aa). 3 N-linked (GlcNAc...) asparagine glycosylation sites follow: N154, N170, and N176. The disordered stretch occupies residues 212–737; the sequence is LDSSTNSGHS…GSTETTLLPD (526 aa). Repeat unit 1 spans residues 222–240; that stretch reads EESTVSHSGPGATGTTLFP. A 28 X 19 AA approximate tandem repeats of E-E-S-X-X-X-H-X-X-P-X-X-T-X-T-X-X-X-P region spans residues 222–4761; it reads EESTVSHSGP…PGSTQTMHFP (4540 aa). 4 stretches are compositionally biased toward polar residues: residues 226-246, 255-288, 296-313, and 325-342; these read VSHS…SATS, SPIT…SSPR, PART…TSHS, and DSTT…SHSI. Low complexity predominate over residues 343–366; it reads PGSTDTTLSPGTTTPSSLGPESTT. Polar residues predominate over residues 367 to 387; the sequence is FHSSPGYTKTTRLPDNTTTSG. The N-linked (GlcNAc...) asparagine glycan is linked to N382. The span at 396-413 shows a compositional bias: low complexity; the sequence is HSSTGSPHTTLSPSSSTT. Residues 419-440 show a composition bias toward polar residues; sequence TTFQSWPSSKDTSPAPSGTTSA. 2 stretches are compositionally biased toward low complexity: residues 445–466 and 478–495; these read STTY…SSTT and SSPV…SATS. A run of 2 repeats spans residues 471–489 and 499–517. Residues 531–554 are compositionally biased toward low complexity; the sequence is TFHGSTTHTKSSTPSTTAALAHTS. Polar residues-rich tracts occupy residues 555-575 and 608-648; these read YHSS…TISG and STPS…SPDT. Residues 654–669 show a composition bias toward low complexity; it reads SMTSSGVSEESTTSHS. Repeat unit 4 spans residues 662–680; that stretch reads EESTTSHSRPGSTHTTAFP. 2 stretches are compositionally biased toward polar residues: residues 670–715 and 722–737; these read RPGS…TASS and TFHS…LLPD. N738 is a glycosylation site (N-linked (GlcNAc...) asparagine). Disordered regions lie at residues 749–4847, 4887–5034, 5048–5071, and 5093–5112; these read MPVH…HFTT, SSRS…THTV, STAF…TASD, and ASSS…TSPS. Polar residues-rich tracts occupy residues 751 to 783 and 792 to 842; these read VHSS…WPSS and TTTS…TQTM. Repeat 5 spans residues 827–845; the sequence is EESTTYHSSPGSTQTMHFP. The span at 859–877 shows a compositional bias: low complexity; it reads TSHSSTTHTISSAPSTTSA. 2 stretches are compositionally biased toward polar residues: residues 884–899 and 928–970; these read SYHS…HFPD and RSTT…TTFH. The span at 971–1007 shows a compositional bias: low complexity; the sequence is SSPRSPATTLSPASTTSSGVSEESTTSRSRPGSTHTT. Residues 1009–1021 are compositionally biased toward polar residues; the sequence is FPDSTTTPGLSRH. Residues 1022–1065 are compositionally biased toward low complexity; that stretch reads STTSHSSPGSTDTTLLPASTTTSGPSQESTTSHSSSGSTDTALS. Composition is skewed to polar residues over residues 1066 to 1101 and 1108 to 1138; these read PGST…TSSG and RVHS…TAFQ. Residues 1139–1157 are compositionally biased toward low complexity; sequence THPASTHTTPSPPSTATAP. The stretch at 1159–1177 is repeat 6; the sequence is EESTTYHRSPGSTPTTHFP. Polar residues-rich tracts occupy residues 1160–1184 and 1191–1207; these read ESTT…TTSG and IFHS…SSAH. Composition is skewed to low complexity over residues 1208-1220, 1229-1241, and 1249-1262; these read STTS…TTSR, TTLP…PGLS, and SSPR…SPAS. 3 stretches are compositionally biased toward polar residues: residues 1271-1324, 1331-1357, and 1364-1377; these read ESTT…TTSV, TFHS…TEES, and PAST…TLTT. 2 stretches are compositionally biased toward low complexity: residues 1384-1396 and 1411-1438; these read STTF…STGT and ESTP…SLSE. Polar residues predominate over residues 1439-1448; sequence KSTTFYTSPR. Residues 1458 to 1481 are compositionally biased toward low complexity; that stretch reads TTTSSGVSEESSTSHSQPGSTHTT. The stretch at 1466 to 1484 is repeat 7; it reads EESSTSHSQPGSTHTTAFP. A compositionally biased stretch (polar residues) spans 1483-1537; it reads FPDSTTTSDLSQEPTTSHSSQGSTEATLSPGSTTASSLGQQSTTFHSSPGDTETT. The span at 1552 to 1568 shows a compositional bias: low complexity; the sequence is STPTHSSTGSLHTTLTP. Polar residues-rich tracts occupy residues 1569-1586 and 1606-1630; these read ASST…FQSW and VSTT…TTLG. Copy 8 of the repeat occupies 1633–1651; it reads EESTTVHSSPGATGTALFP. Polar residues predominate over residues 1653–1708; it reads RSATSVLVGEPTTSPISSGSTETTALPGSTTTAGLSEKSTTFYSSPRSPDTTLSPA. Residues 1709–1724 show a composition bias toward low complexity; that stretch reads STTSSGVSEESTTSHS. Copy 9 of the repeat occupies 1717-1735; that stretch reads EESTTSHSRPGSTHTTAFP. Composition is skewed to polar residues over residues 1725-1797 and 1805-1840; these read RPGS…TTAS and PVHS…SSKD. N1793 carries N-linked (GlcNAc...) asparagine glycosylation. Low complexity-rich tracts occupy residues 1856–1877 and 1889–1906; these read STTS…SSTT and SSPV…STTS. Repeat copies occupy residues 1882-1900 and 1910-1928. Over residues 1914 to 1935 the composition is skewed to polar residues; the sequence is AYHSSPGSTQTMHFPESSTASG. Residues 1943 to 1959 are compositionally biased toward low complexity; sequence SHSSTTHTISSPPSTTS. Composition is skewed to polar residues over residues 1967–1982 and 2011–2053; these read SYHS…HFPD and RSTT…TTFH. The span at 2054 to 2082 shows a compositional bias: low complexity; it reads SSPRSPATTLSPASTTSSGVSEESTTSHS. Repeat 12 spans residues 2075–2093; the sequence is EESTTSHSRPGSTHTTAFP. Polar residues predominate over residues 2083–2104; it reads RPGSTHTTAFPDSTTTPGLSRH. The span at 2105-2130 shows a compositional bias: low complexity; the sequence is STTSHSSPGSTDTTLLPASTTTSGPS. Composition is skewed to polar residues over residues 2131 to 2184 and 2191 to 2221; these read QEST…TSSG and RVHS…TAFQ. The span at 2222 to 2240 shows a compositional bias: low complexity; the sequence is THPASTHTTPSPPSTATAP. Repeat 13 spans residues 2242 to 2260; that stretch reads EESTTYHRSPGSTPTTHFP. Polar residues-rich tracts occupy residues 2243–2267 and 2274–2290; these read ESTT…TTSG and IFHS…SSAH. 3 stretches are compositionally biased toward low complexity: residues 2291-2303, 2312-2324, and 2332-2345; these read STTS…TTSR, TTLP…PGLS, and SSPR…SPAS. The segment covering 2354-2392 has biased composition (polar residues); that stretch reads ESTTSRSQPGSTHSTVSPASTTTPGLSEESTTVYSSSPG. The span at 2393-2407 shows a compositional bias: low complexity; the sequence is STETTVFPRTPTTSV. 2 stretches are compositionally biased toward polar residues: residues 2414 to 2440 and 2447 to 2460; these read TFHS…TEES and PAST…TLTT. Composition is skewed to low complexity over residues 2467-2483 and 2494-2521; these read STTF…TLSP and ESTP…SLSE. A compositionally biased stretch (polar residues) spans 2522–2531; that stretch reads KSTTFYTSPR. Residues 2541–2564 show a composition bias toward low complexity; sequence TTTSSGVSEESSTSHSQPGSTHTT. Repeat 14 spans residues 2549 to 2567; that stretch reads EESSTSHSQPGSTHTTAFP. A compositionally biased stretch (polar residues) spans 2566 to 2578; the sequence is FPDSTTTPGLSRH. The span at 2579-2604 shows a compositional bias: low complexity; that stretch reads STTSHSSPGSTDTTLLPASTTTSGPS. 2 stretches are compositionally biased toward polar residues: residues 2605-2658 and 2665-2695; these read QEST…TSSG and RVHS…TTFQ. Over residues 2696 to 2714 the composition is skewed to low complexity; the sequence is THPASTHTTPSPPSTATAP. Copy 15 of the repeat occupies 2716-2734; the sequence is EESTTYHRSPGSTPTTHFP. 2 stretches are compositionally biased toward polar residues: residues 2717-2741 and 2748-2764; these read ESTT…TTSG and IFHS…SSAH. 3 stretches are compositionally biased toward low complexity: residues 2765 to 2777, 2786 to 2798, and 2806 to 2819; these read STTS…TTSR, TTLP…PGLS, and SSPR…SPAS. Composition is skewed to polar residues over residues 2828-2881, 2888-2914, and 2921-2934; these read ESTT…TTSV, TFHS…TEES, and PAST…TLTT. 2 stretches are compositionally biased toward low complexity: residues 2941 to 2957 and 2968 to 2995; these read STTF…TLSP and ESTP…SLSE. Residues 2996–3005 are compositionally biased toward polar residues; the sequence is KSTTFYTSPR. A compositionally biased stretch (low complexity) spans 3015–3038; sequence TTTSSGVSEESSTSHSQPGSTHTT. Copy 16 of the repeat occupies 3023–3041; the sequence is EESSTSHSQPGSTHTTAFP. The span at 3040–3094 shows a compositional bias: polar residues; the sequence is FPDSTTTSGLSQEPTASHSSQGSTEATLSPGSTTASSLGQQSTTFHSSPGDTETT. Positions 3109–3125 are enriched in low complexity; it reads STPTHSSTGSLHTTLTP. 2 stretches are compositionally biased toward polar residues: residues 3126–3143 and 3163–3187; these read ASST…FQSW and VSTT…TTLG. The stretch at 3190–3208 is repeat 17; the sequence is EESTTVHSSPGATGTALFP. The segment covering 3210 to 3265 has biased composition (polar residues); the sequence is RSATSVLVGEPTTSPISSGSTETTALPGSTTTAGLSEKSTTFYSSPRSPDTTLSPA. Residues 3266–3281 are compositionally biased toward low complexity; that stretch reads STTSSGVSEESTTSHS. Repeat unit 18 spans residues 3274–3292; that stretch reads EESTTSHSRPGSTHTTAFP. Polar residues-rich tracts occupy residues 3282 to 3354 and 3362 to 3397; these read RPGS…TTAS and PVHS…NSKD. N-linked (GlcNAc...) asparagine glycosylation occurs at N3350. Low complexity-rich tracts occupy residues 3413–3434 and 3446–3463; these read STTS…SSTT and SSPV…STTS. 2 repeat units span residues 3439–3457 and 3467–3485. Polar residues predominate over residues 3468–3482; that stretch reads ESTTYHSSPGSTQTM. Positions 3499–3517 are enriched in low complexity; sequence TSHSSTTHTISSAPSTTSA. Polar residues-rich tracts occupy residues 3524–3539 and 3568–3610; these read SYHS…HFPD and RSTT…TTFH. The span at 3611–3639 shows a compositional bias: low complexity; sequence SSPRSPATTLSPASTTSSGVSEESTTSHS. Copy 21 of the repeat occupies 3632–3650; that stretch reads EESTTSHSRPGSTHTTAFP. Polar residues predominate over residues 3640–3661; that stretch reads RPGSTHTTAFPDSTTTPGLSRH. Positions 3662–3705 are enriched in low complexity; that stretch reads STTSHSSPGSTDTTLLPASTTTSGSSQESTTSHSSSGSTDTALS. 2 stretches are compositionally biased toward polar residues: residues 3706-3741 and 3748-3778; these read PGST…TSSG and RVHS…TAFQ. Over residues 3779 to 3797 the composition is skewed to low complexity; the sequence is THPASTHTTPSPPSTATAP. Repeat unit 22 spans residues 3799 to 3817; the sequence is EESTTYHRSPGSTPTTHFP. Polar residues-rich tracts occupy residues 3800 to 3824 and 3831 to 3847; these read ESTT…TTSG and IFHS…SSAH. Composition is skewed to low complexity over residues 3848–3860, 3869–3881, and 3889–3902; these read STTS…TTSR, TTLP…PGLS, and SSPR…SPAS. Polar residues-rich tracts occupy residues 3911-3963, 3971-3997, and 4004-4017; these read ESTT…TTTS, TFHS…TEES, and PAST…TLTT. Composition is skewed to low complexity over residues 4024–4036 and 4051–4078; these read STTF…STGT and ESTP…SLSE. A compositionally biased stretch (polar residues) spans 4079–4088; it reads KSTTFYTSPR. The span at 4098 to 4121 shows a compositional bias: low complexity; the sequence is TTTSSGVSEESSTSHSQPGSTHTT. Repeat unit 23 spans residues 4106 to 4124; the sequence is EESSTSHSQPGSTHTTAFP. The segment covering 4123–4177 has biased composition (polar residues); sequence FPDSTTTSGLSQEPTTSHSSQGSTEATLSPGSTTASSLGQQSTTFHSSPGDTETT. Residues 4192–4208 are compositionally biased toward low complexity; that stretch reads STPTHSSTGSLHTTLTP. Positions 4209–4226 are enriched in polar residues; it reads ASSTSTGLQEESTTFQSW. The segment covering 4227 to 4249 has biased composition (low complexity); it reads PSSSDTTPSPPSTTAVPVEVSTT. Over residues 4250-4270 the composition is skewed to polar residues; the sequence is YHSRPSSTPTTHFSASSTTLG. The stretch at 4273 to 4291 is repeat 24; the sequence is EESTTVHSSPGATGTALFP. Residues 4293 to 4348 show a composition bias toward polar residues; sequence RSATSVLVGEPTTSPISSGSTETTALPGSTTTAGLSEKSTTFYSSPRSPDTTLSPA. Residues 4349-4364 are compositionally biased toward low complexity; that stretch reads STTSSGVSEESTTSHS. 2 stretches are compositionally biased toward polar residues: residues 4369 to 4437 and 4445 to 4480; these read MHTT…TTAS and PVHS…NSKD. An N-linked (GlcNAc...) asparagine glycan is attached at N4433. Low complexity-rich tracts occupy residues 4496–4517 and 4529–4546; these read STTS…SSTT and SSPV…STTS. 2 repeat units span residues 4522–4540 and 4550–4568. The segment covering 4551–4571 has biased composition (polar residues); it reads ESTTYHSSPGSTQTMHFPESN. An N-linked (GlcNAc...) asparagine glycan is attached at N4571. Over residues 4582–4600 the composition is skewed to low complexity; sequence TSHSSTTHTISSAPSTTSA. Polar residues-rich tracts occupy residues 4607 to 4622 and 4651 to 4688; these read SYHS…HFPD and RSTT…LSEK. Low complexity-rich tracts occupy residues 4689–4710 and 4722–4739; these read STTF…SSTT and SSPV…STTS. 2 tandem repeats follow at residues 4715–4733 and 4743–4761. Polar residues predominate over residues 4747–4768; sequence AYHSSPGSTQTMHFPESSTASG. Low complexity predominate over residues 4776–4792; sequence SHSSTTHTISSPPSTTS. 2 stretches are compositionally biased toward polar residues: residues 4800–4814 and 4887–4917; these read SYHS…THFP and SSRS…SQAE. Positions 4918–4931 are enriched in low complexity; sequence STHTTAFPASTTTS. 2 stretches are compositionally biased toward polar residues: residues 4932 to 5024 and 5048 to 5061; these read GLSQ…STPF and STAF…TGTT. Positions 5094-5112 are enriched in low complexity; it reads SSSTSGLTEESTTFHTSPS. The region spanning 5116 to 5154 is the EGF-like domain; it reads TIVSTESLETLAPGLCQEGQIWNGKQCVCPQGYVGYQCL. A disulfide bond links C5144 and C5153. The SEA domain maps to 5168–5275; that stretch reads LNATLGMTVK…TRTTLLDPDS (108 aa). Residues N5169, N5182, N5197, N5228, and N5264 are each glycosylated (N-linked (GlcNAc...) asparagine). Residues 5226–5233 carry the Cleavage motif motif; the sequence is LLNGSIVV. A helical membrane pass occupies residues 5381 to 5401; it reads GIVGAVMAVLLLALIILIILF. Topologically, residues 5402–5478 are cytoplasmic; it reads SLSQRKRHRE…QRPEMVASTV (77 aa).

Ubiquitous, with higher expression in colon. Down-regulated in colorectal cancer as well as in the colon of patients with ulcerative colitis (UC) and Crohn's disease (CD).

The protein resides in the membrane. Involved in epithelial cell protection, adhesion modulation, and signaling. May be involved in epithelial cell growth regulation. Stimulated by both cytokine TNF-alpha and TGF-beta in intestinal epithelium. The polypeptide is Mucin-12 (MUC12) (Homo sapiens (Human)).